The sequence spans 601 residues: Elongation factor 4 (601 aa).

Positions 2–184 (DLIRNFSIIA…EMIARVPPPT (183 aa)) constitute a tr-type G domain. GTP is bound by residues 14–19 (DHGKST) and 131–134 (NKID).

This sequence belongs to the TRAFAC class translation factor GTPase superfamily. Classic translation factor GTPase family. LepA subfamily.

It is found in the cell inner membrane. It carries out the reaction GTP + H2O = GDP + phosphate + H(+). Required for accurate and efficient protein synthesis under certain stress conditions. May act as a fidelity factor of the translation reaction, by catalyzing a one-codon backward translocation of tRNAs on improperly translocated ribosomes. Back-translocation proceeds from a post-translocation (POST) complex to a pre-translocation (PRE) complex, thus giving elongation factor G a second chance to translocate the tRNAs correctly. Binds to ribosomes in a GTP-dependent manner. The polypeptide is Elongation factor 4 (Polynucleobacter necessarius subsp. necessarius (strain STIR1)).